The chain runs to 223 residues: 7-cyano-7-deazaguanine synthase (223 aa).

An ATP-binding site is contributed by 15 to 25 (FSGGQDSTTCL). 4 residues coordinate Zn(2+): C191, C200, C203, and C206.

It belongs to the QueC family. Homodimer. Requires Zn(2+) as cofactor.

The catalysed reaction is 7-carboxy-7-deazaguanine + NH4(+) + ATP = 7-cyano-7-deazaguanine + ADP + phosphate + H2O + H(+). It functions in the pathway purine metabolism; 7-cyano-7-deazaguanine biosynthesis. Its function is as follows. Catalyzes the ATP-dependent conversion of 7-carboxy-7-deazaguanine (CDG) to 7-cyano-7-deazaguanine (preQ(0)). The polypeptide is 7-cyano-7-deazaguanine synthase (Staphylococcus haemolyticus (strain JCSC1435)).